The primary structure comprises 833 residues: Capsid-associated protein Vp91 (833 aa).

The N-terminal stretch at 1-18 (MSGVVLLVLAIILITIFS) is a signal peptide. Asn137, Asn180, Asn199, and Asn210 each carry an N-linked (GlcNAc...) asparagine; by host glycan. A C2HC BV-type zinc finger spans residues 147-196 (CVPEDPCSGRPPGRYPMNELLLDTLVHNQHSDKNYSAGAHLYHPTLYLRC). 2 disulfide bridges follow: Cys207/Cys220 and Cys260/Cys273. Positions 223-281 (NELCEGRPDGFVLPYFPEALLVNEFVECRNGEHVVAQCADGQVFDRALMTCVHAHPCAF) constitute a Chitin-binding type-2 domain. 4 N-linked (GlcNAc...) asparagine; by host glycosylation sites follow: Asn408, Asn413, Asn588, and Asn609. A disordered region spans residues 647 to 673 (EPGGDGDHWAPEVPPTQPEPELEPESE).

The protein localises to the virion. Functionally, probable capsid-associated protein. The sequence is that of Capsid-associated protein Vp91 from Choristoneura fumiferana nuclear polyhedrosis virus (CfMNPV).